A 151-amino-acid chain; its full sequence is Ribosome maturation factor RimP (151 aa).

This sequence belongs to the RimP family.

Its subcellular location is the cytoplasm. Its function is as follows. Required for maturation of 30S ribosomal subunits. This chain is Ribosome maturation factor RimP, found in Desulfotalea psychrophila (strain LSv54 / DSM 12343).